Consider the following 87-residue polypeptide: Kappa-5-bungarotoxin (87 aa).

An N-terminal signal peptide occupies residues 1 to 21; it reads MKTLLLTLVVVTIVCLDLGYT. Intrachain disulfides connect Cys-24–Cys-42, Cys-35–Cys-63, Cys-48–Cys-52, Cys-67–Cys-79, and Cys-80–Cys-85.

The protein belongs to the three-finger toxin family. Long-chain subfamily. Kappa-neurotoxin sub-subfamily. As to quaternary structure, homo- and heterodimer; non-covalently linked. In terms of tissue distribution, expressed by the venom gland.

The protein resides in the secreted. Its function is as follows. Postsynaptic neurotoxin that binds and inhibits neuronal nicotinic acetylcholine receptors (nAChR) with high affinity (IC(50)&lt;100 nM). Is a selective, and slowly reversible antagonist of alpha-3/CHRNA3-containing and some alpha-4/CHRNA4-containing AChRs. The polypeptide is Kappa-5-bungarotoxin (Bungarus multicinctus (Many-banded krait)).